Here is a 693-residue protein sequence, read N- to C-terminus: Endoprotease bli (693 aa).

The N-terminal stretch at 1 to 20 (MYWQLVRILVLFDCLQKILA) is a signal peptide. The propeptide at 21-116 (IEHDSICIAD…EQRPRVRRKR (96 aa)) is inhibition peptide. Asp161 is a binding site for Ca(2+). The Peptidase S8 domain maps to 167-482 (QWYLNNGAQG…YGLMDAGALV (316 aa)). Asn194 is a glycosylation site (N-linked (GlcNAc...) asparagine). The Charge relay system role is filled by Asp201. Residue Asp202 coordinates substrate. Ca(2+) is bound by residues Asp210, Asp222, Asp227, and Asp229. Residues 215-242 (YDPLASTDINGHDDDPTPQDDGDNKHGT) form a disordered region. 237–238 (DN) serves as a coordination point for substrate. His240 functions as the Charge relay system in the catalytic mechanism. Ile251, Asn254, Tyr256, and Gly258 together coordinate Ca(2+). 2 disulfides stabilise this stretch: Cys257–Cys406 and Cys349–Cys379. Substrate is bound by residues Glu282, 299 to 304 (SWGPED), Asp310, and 338 to 341 (ASGN). Residue Asp304 coordinates Ca(2+). Asp347 serves as a coordination point for Ca(2+). Positions 352 and 354 each coordinate substrate. Residue Glu377 coordinates Ca(2+). Ser414 (charge relay system) is an active-site residue. Ser414 serves as a coordination point for substrate. N-linked (GlcNAc...) asparagine glycosylation is found at Asn433 and Asn518. Positions 490–628 (TVPEQHICTY…SLLLYGTAEP (139 aa)) constitute a P/Homo B domain. An intrachain disulfide couples Cys497 to Cys526. The disordered stretch occupies residues 629-693 (AQPNDPRHSS…LVSAQPELRV (65 aa)). Positions 668-681 (DSRDWQPKKVENKK) are enriched in basic and acidic residues.

The protein belongs to the peptidase S8 family. Furin subfamily. Ca(2+) is required as a cofactor. Post-translationally, N-glycosylated. The inhibition peptide, which plays the role of an intramolecular chaperone, is probably autocatalytically removed in the endoplasmic reticulum (ER) and remains non-covalently bound as a potent autoinhibitor. Probably following transport to the trans Golgi, a second cleavage within the inhibition propeptide results in propeptide dissociation and bli activation.

The protein resides in the secreted. It carries out the reaction Release of mature proteins from their proproteins by cleavage of -Arg-Xaa-Yaa-Arg-|-Zaa- bonds, where Xaa can be any amino acid and Yaa is Arg or Lys. Releases albumin, complement component C3 and von Willebrand factor from their respective precursors.. Its activity is regulated as follows. Inhibited by the propeptide before the second cleavage. Inhibited by ethylenediaminetetraacetic acid (EDTA), ZnSO(4) and chloroketone DEC-RVKR-CMK. Functionally, serine endoprotease which cleaves substrates at the RX(K/R)R consensus motif. This chain is Endoprotease bli, found in Onchocerca volvulus.